The chain runs to 302 residues: Glycine--tRNA ligase alpha subunit (302 aa).

The protein belongs to the class-II aminoacyl-tRNA synthetase family. Tetramer of two alpha and two beta subunits.

It localises to the cytoplasm. It catalyses the reaction tRNA(Gly) + glycine + ATP = glycyl-tRNA(Gly) + AMP + diphosphate. The protein is Glycine--tRNA ligase alpha subunit of Edwardsiella ictaluri (strain 93-146).